The primary structure comprises 129 residues: MSASLVRATVRAVSKRKLQPTRAALTLTPSAVNKIKQLLKDKPEHVGLKVGVRTRGCNGLSYSLEYTKTKGDSDEEVIQDGVRVFIEKKAQLTLLGTEMDYVEDKLSSEFVFNNPNIKGTCGCGESFHV.

The transit peptide at 1-12 (MSASLVRATVRA) directs the protein to the mitochondrion. Fe cation-binding residues include C57, C121, and C123.

This sequence belongs to the HesB/IscA family. As to quaternary structure, interacts with CRY2, but not with CRY1 (in vitro).

It is found in the mitochondrion. Involved in the maturation of mitochondrial 4Fe-4S proteins functioning late in the iron-sulfur cluster assembly pathway. Probably involved in the binding of an intermediate of Fe/S cluster assembly. In Mus musculus (Mouse), this protein is Iron-sulfur cluster assembly 1 homolog, mitochondrial (Isca1).